Consider the following 464-residue polypeptide: Secretion-regulating guanine nucleotide exchange factor (464 aa).

RCC1 repeat units lie at residues 15 to 67 (AVLF…VTDG), 68 to 119 (GDLF…LTEK), 120 to 171 (GQVL…TTAT), 172 to 230 (GSVF…LTDT), 231 to 283 (GELY…KTET), 284 to 351 (GKVF…VIRD), and 352 to 402 (KCCS…LAVC). Residues 422 to 464 (DDTENTESQGAVDRDRLEGETISDLNPDRTRNGGGGCESETVQ) are disordered. Ser-429 carries the post-translational modification Phosphoserine.

As to quaternary structure, interacts with SEC5. The interaction occurs only in the presence of magnesium or manganese and is stimulated by dCTP or GTP.

It localises to the cytoplasm. The protein localises to the nucleus. Functionally, probable guanine nucleotide exchange factor (GEF), which may be involved in the secretion process. In Mus musculus (Mouse), this protein is Secretion-regulating guanine nucleotide exchange factor (Sergef).